We begin with the raw amino-acid sequence, 126 residues long: 13 kDa ribonucleoprotein-associated protein (126 aa).

The protein belongs to the eukaryotic ribosomal protein eL8 family. In terms of assembly, component of the U3 snoRNP particle. Binds to the C'/D and B/C motifs in U3 snoRNA. Component of the 25S U4/U6.U5 tri-snRNP particle, a subcomplex of the spliceosome. Binds to the 5' stem-loop of U4 snRNA.

Its subcellular location is the nucleus. It localises to the nucleolus. In terms of biological role, common component of the spliceosome and rRNA processing machinery. In association with the spliceosomal U4/U6.U5 tri-snRNP particle, required for splicing of pre-mRNA. In association with box C/D snoRNPs, required for processing of pre-ribosomal RNA (rRNA) and site-specific 2'-O-methylation of substrate RNAs. Essential for the accumulation and stability of U4 snRNA, U6 snRNA, and box C/D snoRNAs. In Debaryomyces hansenii (strain ATCC 36239 / CBS 767 / BCRC 21394 / JCM 1990 / NBRC 0083 / IGC 2968) (Yeast), this protein is 13 kDa ribonucleoprotein-associated protein (SNU13).